We begin with the raw amino-acid sequence, 203 residues long: MDKAFDEIIGNSHTDSSSNHKVTRYRRRDLRNELGPRLGFAPSDAASRSKDRLYREREEPPLPKRIRISKIPLDVSDYTLDDMIKEFGSPIFSKIFDNKEDRTCIYEFEDPEVLEKIVERYNGYELHNAKIEVEIYQPQRKHSRMNAHNRRKQTAQEQGRGRPGSHYRQRPNRVSKKNKGREKNNTPTSVEALDAELDAYMKG.

The residue at position 1 (methionine 1) is an N-acetylmethionine. Disordered stretches follow at residues 1–60 and 137–203; these read MDKA…REEP and QPQR…YMKG. Polar residues predominate over residues 11–20; that stretch reads NSHTDSSSNH. Basic and acidic residues predominate over residues 47–60; that stretch reads SRSKDRLYREREEP. The 75-residue stretch at 64–138 folds into the RRM domain; sequence KRIRISKIPL…AKIEVEIYQP (75 aa). Composition is skewed to basic residues over residues 139–153 and 163–180; these read QRKHSRMNAHNRRKQ and PGSHYRQRPNRVSKKNKG.

It belongs to the YRA1 family. In terms of assembly, associates with mRNPs. Interacts with YRA1.

Its subcellular location is the nucleus. Functionally, involved in export of poly(A) mRNAs from the nucleus. Recruited to the coding sequences as well as poly-A sites of active genes. This chain is RNA annealing protein YRA2 (YRA2), found in Saccharomyces cerevisiae (strain Lalvin EC1118 / Prise de mousse) (Baker's yeast).